A 425-amino-acid chain; its full sequence is MGPRRLLLVAACLCLCGPLLSARTRARRPASKATNATLDPRSFLLRNPNDKYEPFWEDEEKNESGLTEYRLVSINKSSPLQKPLPAFISEDASGYLTSSWLTLFVPSVYTGVFVVSLPVNIMAIVVFILKMKVKKPAVVYMLHLATADVLFVSVLPFKISYYLSGSDWQFGSELCRFVTAAFYCNMYASILLMTVISIDRFLAVVYPMQSLSWRTLGRASFTCLAIWALAIAGVVPLLLKEQTIQVPGLNITTCHDVLNETLLEGYYAYYFSAFSAVFFFVPLIISTVCYVSIIRCLSSSTVANRSKKSRALFLSAAVFCIFIICFGPTNILLIAHYSFLSHTSTTEAAYFAYLLCVCVSSISCCIDPLIYYYASSECQRYVYSILCCKESSDPSSSNSSGQLMASKMDTCSSNLNNSIYKKLLT.

The first 21 residues, 1-21, serve as a signal peptide directing secretion; it reads MGPRRLLLVAACLCLCGPLLS. Residues 22 to 41 constitute a propeptide, removed for receptor activation; the sequence is ARTRARRPASKATNATLDPR. N-linked (GlcNAc...) asparagine glycans are attached at residues N35, N62, and N75. The Extracellular segment spans residues 42-102; that stretch reads SFLLRNPNDK…SGYLTSSWLT (61 aa). A helical transmembrane segment spans residues 103–128; that stretch reads LFVPSVYTGVFVVSLPVNIMAIVVFI. Topologically, residues 129–137 are cytoplasmic; it reads LKMKVKKPA. The helical transmembrane segment at 138–157 threads the bilayer; it reads VVYMLHLATADVLFVSVLPF. The Extracellular portion of the chain corresponds to 158–176; sequence KISYYLSGSDWQFGSELCR. C175 and C254 are joined by a disulfide. A helical transmembrane segment spans residues 177 to 198; sequence FVTAAFYCNMYASILLMTVISI. Topologically, residues 199–218 are cytoplasmic; sequence DRFLAVVYPMQSLSWRTLGR. A helical transmembrane segment spans residues 219–239; that stretch reads ASFTCLAIWALAIAGVVPLLL. The Extracellular portion of the chain corresponds to 240 to 268; sequence KEQTIQVPGLNITTCHDVLNETLLEGYYA. N250 and N259 each carry an N-linked (GlcNAc...) asparagine glycan. The helical transmembrane segment at 269–288 threads the bilayer; it reads YYFSAFSAVFFFVPLIISTV. Residues 289-311 lie on the Cytoplasmic side of the membrane; that stretch reads CYVSIIRCLSSSTVANRSKKSRA. Residues 312 to 334 form a helical membrane-spanning segment; the sequence is LFLSAAVFCIFIICFGPTNILLI. Over 335-350 the chain is Extracellular; the sequence is AHYSFLSHTSTTEAAY. Residues 351–374 traverse the membrane as a helical segment; that stretch reads FAYLLCVCVSSISCCIDPLIYYYA. The Cytoplasmic portion of the chain corresponds to 375–425; that stretch reads SSECQRYVYSILCCKESSDPSSSNSSGQLMASKMDTCSSNLNNSIYKKLLT. A Phosphoserine modification is found at S418.

This sequence belongs to the G-protein coupled receptor 1 family. Post-translationally, proteolytic cleavage by thrombin generates a new N-terminus that functions as a tethered ligand. Also proteolytically cleaved by cathepsin CTSG. Cleavage at 41-Arg-|-Ser-42 by CTSG results in receptor activation while cleavage at 55-Phe-|-Trp-56 results in inhibition of receptor activation. Phosphorylated in the C-terminal tail; probably mediating desensitization prior to the uncoupling and internalization of the receptor.

It localises to the cell membrane. In terms of biological role, high affinity receptor that binds the activated thrombin, leading to calcium release from intracellular stores. The thrombin-activated receptor signaling pathway is mediated through PTX-insensitive G proteins, activation of phospholipase C resulting in the production of 1D-myo-inositol 1,4,5-trisphosphate (InsP3) which binds to InsP3 receptors causing calcium release from the stores. In astrocytes, the calcium released into the cytosol allows the Ca(2+)-dependent release of L-glutamate into the synaptic cleft through BEST1, that targets the neuronal postsynaptic GRIN2A/NMDAR receptor resulting in the synaptic plasticity regulation. May play a role in platelets activation and in vascular development. Mediates up-regulation of pro-inflammatory cytokines, such as MCP-1/CCL2 and IL6, triggered by coagulation factor Xa (F10) in cardiac fibroblasts and umbilical vein endothelial cells. This is Proteinase-activated receptor 1 from Papio hamadryas (Hamadryas baboon).